A 923-amino-acid polypeptide reads, in one-letter code: Helicase POLQ-like (923 aa).

Residues 1–84 (MNRTPIRRCK…STVTPIQQKI (84 aa)) are disordered. Residues 43 to 55 (STSPQSPSSSTEN) show a composition bias toward low complexity. In terms of domain architecture, Helicase ATP-binding spans 178-349 (DKRLLDGENC…ALRAFVYSTN (172 aa)). Residue 191 to 198 (LPTGAGKT) participates in ATP binding. The DEAH box signature appears at 295–298 (DELH). A Helicase C-terminal domain is found at 392–596 (GICQLLAKLI…CVVLKLAENI (205 aa)).

The protein belongs to the helicase family. SKI2 subfamily.

It is found in the nucleus. The protein localises to the chromosome. It carries out the reaction Couples ATP hydrolysis with the unwinding of duplex DNA by translocating in the 3'-5' direction.. It catalyses the reaction ATP + H2O = ADP + phosphate + H(+). Its function is as follows. Single-stranded 3'-5' DNA helicase that plays a key role in homology-driven double-strand break (DSB) repair. Involved in different DSB repair mechanisms that are guided by annealing of extensive stretches of complementary bases at break ends, such as microhomology-mediated end-joining (MMEJ), single-strand annealing (SSA) or synthesis-dependent strand annealing (SDSA). This Caenorhabditis elegans protein is Helicase POLQ-like.